The chain runs to 157 residues: Protein-export protein SecB (157 aa).

It belongs to the SecB family. As to quaternary structure, homotetramer, a dimer of dimers. One homotetramer interacts with 1 SecA dimer.

The protein localises to the cytoplasm. In terms of biological role, one of the proteins required for the normal export of preproteins out of the cell cytoplasm. It is a molecular chaperone that binds to a subset of precursor proteins, maintaining them in a translocation-competent state. It also specifically binds to its receptor SecA. The chain is Protein-export protein SecB from Photobacterium profundum (strain SS9).